The following is a 384-amino-acid chain: S-adenosylmethionine synthase (384 aa).

Position 15 (His15) interacts with ATP. A Mg(2+)-binding site is contributed by Asp17. Glu43 contributes to the K(+) binding site. L-methionine is bound by residues Glu56 and Gln99. Residues 99-109 (QSPDINQGVDR) form a flexible loop region. ATP-binding positions include 164–166 (DAK), 230–231 (RF), Asp239, 245–246 (RK), Ala262, and Lys266. Asp239 serves as a coordination point for L-methionine. L-methionine is bound at residue Lys270.

It belongs to the AdoMet synthase family. As to quaternary structure, homotetramer; dimer of dimers. Mg(2+) is required as a cofactor. Requires K(+) as cofactor.

It is found in the cytoplasm. The enzyme catalyses L-methionine + ATP + H2O = S-adenosyl-L-methionine + phosphate + diphosphate. It participates in amino-acid biosynthesis; S-adenosyl-L-methionine biosynthesis; S-adenosyl-L-methionine from L-methionine: step 1/1. Functionally, catalyzes the formation of S-adenosylmethionine (AdoMet) from methionine and ATP. The overall synthetic reaction is composed of two sequential steps, AdoMet formation and the subsequent tripolyphosphate hydrolysis which occurs prior to release of AdoMet from the enzyme. This is S-adenosylmethionine synthase from Escherichia fergusonii (strain ATCC 35469 / DSM 13698 / CCUG 18766 / IAM 14443 / JCM 21226 / LMG 7866 / NBRC 102419 / NCTC 12128 / CDC 0568-73).